Reading from the N-terminus, the 175-residue chain is NADH-ubiquinone oxidoreductase chain 6 (175 aa).

The next 5 helical transmembrane spans lie at 1 to 21 (MMLY…VGFS), 25 to 45 (SPIY…GIVL), 47 to 67 (FGGS…MMVV), 88 to 108 (AVLG…YYVL), and 149 to 169 (YGTW…VVIM).

It belongs to the complex I subunit 6 family. As to quaternary structure, core subunit of respiratory chain NADH dehydrogenase (Complex I) which is composed of 45 different subunits.

It is found in the mitochondrion inner membrane. The enzyme catalyses a ubiquinone + NADH + 5 H(+)(in) = a ubiquinol + NAD(+) + 4 H(+)(out). Its function is as follows. Core subunit of the mitochondrial membrane respiratory chain NADH dehydrogenase (Complex I) which catalyzes electron transfer from NADH through the respiratory chain, using ubiquinone as an electron acceptor. Essential for the catalytic activity and assembly of complex I. The protein is NADH-ubiquinone oxidoreductase chain 6 (MT-ND6) of Bos indicus (Zebu).